The sequence spans 476 residues: Tubulointerstitial nephritis antigen (476 aa).

N38 carries N-linked (GlcNAc...) asparagine glycosylation. The 49-residue stretch at 59–107 folds into the SMB domain; sequence NFGCCEDRDDGCVTEFYAANALCYCDKFCDRENSDCCPDYKSFCREEKE. 6 cysteine pairs are disulfide-bonded: C63-C70, C70-C102, C81-C83, C81-C95, C87-C94, and C95-C102. N-linked (GlcNAc...) asparagine glycans are attached at residues N175, N314, N360, and N455.

Belongs to the peptidase C1 family. In terms of processing, it has been suggested that the active SMB domain may be permitted considerable disulfide bond heterogeneity or variability, thus 2 alternate disulfide patterns based on 3D structures are described with 1 disulfide bond conserved in both. Expressed in the kidney cortex, small intestine and cornea.

The protein resides in the secreted. It localises to the extracellular space. It is found in the extracellular matrix. Its subcellular location is the basement membrane. In terms of biological role, mediates adhesion of proximal tubule epithelial cells via integrins alpha3-beta1 and alphaV-beta3. This is a non catalytic peptidase C1 family protein. This is Tubulointerstitial nephritis antigen (TINAG) from Homo sapiens (Human).